The chain runs to 160 residues: Cytochrome b6-f complex subunit 4 (160 aa).

The next 3 membrane-spanning stretches (helical) occupy residues leucine 36 to valine 56, leucine 95 to glutamate 115, and threonine 131 to isoleucine 151.

It belongs to the cytochrome b family. PetD subfamily. In terms of assembly, the 4 large subunits of the cytochrome b6-f complex are cytochrome b6, subunit IV (17 kDa polypeptide, petD), cytochrome f and the Rieske protein, while the 4 small subunits are petG, petL, petM and petN. The complex functions as a dimer.

Its subcellular location is the plastid. It localises to the chloroplast thylakoid membrane. In terms of biological role, component of the cytochrome b6-f complex, which mediates electron transfer between photosystem II (PSII) and photosystem I (PSI), cyclic electron flow around PSI, and state transitions. In Mesostigma viride (Green alga), this protein is Cytochrome b6-f complex subunit 4.